Reading from the N-terminus, the 438-residue chain is Protein SPMIP7 (438 aa).

In terms of tissue distribution, testis-specific.

Essential for normal spermatogenesis. This is Protein SPMIP7 from Homo sapiens (Human).